A 570-amino-acid chain; its full sequence is Putative pyruvate decarboxylase C3G9.11c (570 aa).

Pyruvate is bound by residues Asp30 and His119. Thiamine diphosphate-binding positions include Thr396 and 419 to 421 (GSI). Asp451 is a binding site for Mg(2+). Thiamine diphosphate-binding positions include 452–453 (GS) and 478–483 (NKGYTI). Asn478 and Gly480 together coordinate Mg(2+). Glu484 is a binding site for pyruvate.

Belongs to the TPP enzyme family. As to quaternary structure, homotetramer. Requires Mg(2+) as cofactor. Thiamine diphosphate is required as a cofactor.

It is found in the cytoplasm. The protein resides in the nucleus. It catalyses the reaction a 2-oxocarboxylate + H(+) = an aldehyde + CO2. The catalysed reaction is pyruvate + H(+) = acetaldehyde + CO2. The polypeptide is Putative pyruvate decarboxylase C3G9.11c (Schizosaccharomyces pombe (strain 972 / ATCC 24843) (Fission yeast)).